The primary structure comprises 1406 residues: Protein crumbs homolog 1 (1406 aa).

Residues Met-1 to Ser-25 form the signal peptide. Residues Phe-26–Thr-1347 lie on the Extracellular side of the membrane. Residues Asn-30, Asn-41, and Asn-42 are each glycosylated (N-linked (GlcNAc...) asparagine). EGF-like domains are found at residues Asn-30 to Asp-68, Met-70 to Glu-108, and Thr-110 to Glu-146. Intrachain disulfides connect Cys-34–Cys-45, Cys-39–Cys-54, Cys-56–Cys-67, Cys-74–Cys-85, Cys-79–Cys-96, Cys-98–Cys-107, Cys-114–Cys-125, Cys-119–Cys-134, Cys-136–Cys-145, Cys-152–Cys-163, Cys-157–Cys-172, Cys-174–Cys-183, Cys-190–Cys-201, Cys-195–Cys-210, Cys-212–Cys-221, Cys-228–Cys-239, Cys-233–Cys-248, Cys-250–Cys-259, Cys-266–Cys-277, and Cys-271–Cys-286. The 37-residue stretch at Asp-148–Asp-184 folds into the EGF-like 4; calcium-binding domain. One can recognise an EGF-like 5; calcium-binding domain in the interval Glu-186–Glu-222. Residue Asn-215 is glycosylated (N-linked (GlcNAc...) asparagine). The EGF-like 6; calcium-binding domain maps to Glu-224 to Glu-260. In terms of domain architecture, EGF-like 7; calcium-binding spans Asn-262–Glu-299. Asn-287 carries N-linked (GlcNAc...) asparagine glycosylation. 13 disulfide bridges follow: Cys-288-Cys-298, Cys-305-Cys-316, Cys-310-Cys-325, Cys-327-Cys-336, Cys-343-Cys-354, Cys-348-Cys-383, Cys-385-Cys-394, Cys-401-Cys-412, Cys-406-Cys-421, Cys-423-Cys-438, Cys-445-Cys-456, Cys-450-Cys-469, and Cys-471-Cys-480. EGF-like domains are found at residues Leu-301 to Glu-337 and Asp-339 to Glu-395. N-linked (GlcNAc...) asparagine glycans are attached at residues Asn-313 and Asn-322. Positions Asp-397 to Ser-439 constitute an EGF-like 10; calcium-binding domain. N-linked (GlcNAc...) asparagine glycosylation is found at Asn-418, Asn-427, and Asn-453. Residues Ile-441 to Glu-481 form the EGF-like 11 domain. Residues Thr-485–Cys-670 form the Laminin G-like 1 domain. N-linked (GlcNAc...) asparagine glycans are attached at residues Asn-550, Asn-561, and Asn-657. Cystine bridges form between Cys-642–Cys-670, Cys-676–Cys-687, Cys-681–Cys-696, and Cys-698–Cys-707. An EGF-like 12 domain is found at Arg-672–Leu-708. In terms of domain architecture, Laminin G-like 2 spans Gly-714–Cys-885. N-linked (GlcNAc...) asparagine glycosylation is found at Asn-757, Asn-871, and Asn-880. 6 cysteine pairs are disulfide-bonded: Cys-851/Cys-885, Cys-891/Cys-902, Cys-896/Cys-911, Cys-913/Cys-922, Cys-928/Cys-939, and Cys-933/Cys-948. 2 EGF-like domains span residues Gly-887–Glu-923 and Glu-924–Gln-960. One can recognise a Laminin G-like 3 domain in the interval Ala-950–Cys-1137. Residues Asn-968, Asn-975, and Asn-1000 are each glycosylated (N-linked (GlcNAc...) asparagine). Intrachain disulfides connect Cys-1096/Cys-1137, Cys-1143/Cys-1154, Cys-1148/Cys-1163, Cys-1165/Cys-1174, Cys-1181/Cys-1191, Cys-1186/Cys-1200, Cys-1202/Cys-1211, Cys-1218/Cys-1229, Cys-1223/Cys-1238, Cys-1240/Cys-1249, Cys-1259/Cys-1274, Cys-1268/Cys-1283, Cys-1285/Cys-1294, Cys-1301/Cys-1312, Cys-1306/Cys-1321, and Cys-1323/Cys-1332. The EGF-like 15 domain occupies Gln-1139–Glu-1175. The EGF-like 16; calcium-binding domain maps to Asn-1177 to Glu-1212. Asn-1190 carries an N-linked (GlcNAc...) asparagine glycan. 2 EGF-like domains span residues Asp-1214 to Arg-1250 and Pro-1255 to Glu-1295. Residues Asn-1243, Asn-1265, and Asn-1273 are each glycosylated (N-linked (GlcNAc...) asparagine). In terms of domain architecture, EGF-like 19; calcium-binding spans Asp-1297–Glu-1333. Residues Ile-1348 to Val-1368 form a helical membrane-spanning segment. Residues Thr-1369–Ile-1406 are Cytoplasmic-facing. The interaction with EPB41L5 stretch occupies residues Ser-1370–Ile-1406.

The protein belongs to the Crumbs protein family. Component of a complex composed of PALS1, CRB1 and EPB41L5. Within the complex, interacts (via intracellular domain) with PALS1 and EPB41L5 (via FERM domain). Forms a complex with MPP4 and PALS1. Interacts with MPDZ/MUPP1 and MPP4. In terms of processing, extensively glycosylated. In terms of tissue distribution, preferential expression in retina, also expressed in brain, testis, fetal brain and fetal eye. Expressed at the outer limiting membrane and apical to adherens junctions in the retina.

Its subcellular location is the apical cell membrane. It localises to the secreted. The protein resides in the cell projection. It is found in the cilium. The protein localises to the photoreceptor outer segment. Its subcellular location is the photoreceptor inner segment. In terms of biological role, plays a role in photoreceptor morphogenesis in the retina. May maintain cell polarization and adhesion. The protein is Protein crumbs homolog 1 of Homo sapiens (Human).